Consider the following 149-residue polypeptide: Large ribosomal subunit protein uL13 (149 aa).

It belongs to the universal ribosomal protein uL13 family. Part of the 50S ribosomal subunit.

In terms of biological role, this protein is one of the early assembly proteins of the 50S ribosomal subunit, although it is not seen to bind rRNA by itself. It is important during the early stages of 50S assembly. The polypeptide is Large ribosomal subunit protein uL13 (Saccharolobus solfataricus (strain ATCC 35092 / DSM 1617 / JCM 11322 / P2) (Sulfolobus solfataricus)).